The following is a 248-amino-acid chain: Agamous-like MADS-box protein AGL1 (248 aa).

In terms of domain architecture, MADS-box spans 18–72 (RGKIEIKRIENTTNRQVTFCKRRNGLLKKAYELSVLCDAEVALVIFSTRGRLYEY). The K-box domain maps to 102–192 (TQYYQQEASK…RAKIAEGARL (91 aa)).

As to quaternary structure, interacts with AGL15 and AGL16.

The protein resides in the nucleus. In terms of biological role, probable transcription factor. Interacts genetically with TT16/AGL32 in a partially antagonistic manner during flower development. Is essential for the coordination of cell divisions in ovule, seed coat development and endosperm formation. In Arabidopsis thaliana (Mouse-ear cress), this protein is Agamous-like MADS-box protein AGL1 (AGL1).